The chain runs to 419 residues: 3-isopropylmalate dehydratase large subunit (419 aa).

The [4Fe-4S] cluster site is built by C300, C360, and C363.

The protein belongs to the aconitase/IPM isomerase family. LeuC type 2 subfamily. In terms of assembly, heterodimer of LeuC and LeuD. Requires [4Fe-4S] cluster as cofactor.

It carries out the reaction (2R,3S)-3-isopropylmalate = (2S)-2-isopropylmalate. It participates in amino-acid biosynthesis; L-leucine biosynthesis; L-leucine from 3-methyl-2-oxobutanoate: step 2/4. Its function is as follows. Catalyzes the isomerization between 2-isopropylmalate and 3-isopropylmalate, via the formation of 2-isopropylmaleate. The sequence is that of 3-isopropylmalate dehydratase large subunit from Acetivibrio thermocellus (strain ATCC 27405 / DSM 1237 / JCM 9322 / NBRC 103400 / NCIMB 10682 / NRRL B-4536 / VPI 7372) (Clostridium thermocellum).